Consider the following 309-residue polypeptide: UDP-N-acetylenolpyruvoylglucosamine reductase (309 aa).

The FAD-binding PCMH-type domain maps to 25-188 (RVGGPADWLF…TSVTLQGNRE (164 aa)). Residue arginine 168 is part of the active site. Residues 202–231 (AKRDATQPTKALTAGSTFRNPAGFSSTGQA) are disordered. A compositionally biased stretch (polar residues) spans 207-231 (TQPTKALTAGSTFRNPAGFSSTGQA). The Proton donor role is filled by serine 217. Glutamate 299 is a catalytic residue.

It belongs to the MurB family. It depends on FAD as a cofactor.

It is found in the cytoplasm. It carries out the reaction UDP-N-acetyl-alpha-D-muramate + NADP(+) = UDP-N-acetyl-3-O-(1-carboxyvinyl)-alpha-D-glucosamine + NADPH + H(+). It participates in cell wall biogenesis; peptidoglycan biosynthesis. Cell wall formation. The sequence is that of UDP-N-acetylenolpyruvoylglucosamine reductase from Jannaschia sp. (strain CCS1).